Consider the following 479-residue polypeptide: tRNA-dihydrouridine(20) synthase [NAD(P)+] (479 aa).

Residues 14–16 and Q87 contribute to the FMN site; that span reads PMV. The Proton donor role is filled by C116. FMN-binding positions include K159, H187, 221–223, and 245–246; these read NGD and AR.

It belongs to the Dus family. Dus2 subfamily. Requires FMN as cofactor.

It is found in the cytoplasm. The protein localises to the nucleus. It carries out the reaction 5,6-dihydrouridine(20) in tRNA + NADP(+) = uridine(20) in tRNA + NADPH + H(+). The enzyme catalyses 5,6-dihydrouridine(20) in tRNA + NAD(+) = uridine(20) in tRNA + NADH + H(+). The catalysed reaction is a 5,6-dihydrouridine in mRNA + NAD(+) = a uridine in mRNA + NADH + H(+). It catalyses the reaction a 5,6-dihydrouridine in mRNA + NADP(+) = a uridine in mRNA + NADPH + H(+). Catalyzes the NADPH-dependent synthesis of dihydrouridine, a modified base found in the D-loop of most tRNAs. Specifically modifies U20 in cytoplasmic tRNAs. Also able to mediate dihydrouridylation of some mRNAs, thereby affecting their translation. The polypeptide is tRNA-dihydrouridine(20) synthase [NAD(P)+] (Schizosaccharomyces pombe (strain 972 / ATCC 24843) (Fission yeast)).